The following is a 787-amino-acid chain: Vacuolar protein sorting-associated protein 35A (787 aa).

Methionine 1 carries the post-translational modification N-acetylmethionine.

It belongs to the VPS35 family. In terms of assembly, component of the retromer complex which consists of VPS29 (MAG1), VPS26 (VPS26A or VPS26B), VPS35 (VPS35A or VPS35B or VPS35C), VPS5/17 (SNX1 or SNX2A or SNX2B). Component of a retromer subcomplex consisting of VPS29 (MAG1), VPS26 (VPS26A or VPS26B), VPS35 (VPS35A or VPS35B or VPS35C). Interacts with RABG3F.

The protein localises to the cytoplasm. The protein resides in the endosome membrane. Its subcellular location is the prevacuolar compartment membrane. It localises to the golgi apparatus. It is found in the trans-Golgi network membrane. Its function is as follows. Plays a role in vesicular protein sorting. Component of the membrane-associated retromer complex which is essential in endosome-to-Golgi retrograde transport. Also involved in the efficient sorting of seed storage proteins. Binds alone to endosomal membranes and is required for recruitment of VPS26 and VPS29 to membrane. The VPS29-VPS26-VPS35 subcomplex may be involved in recycling of specific cargos from endosome to the plasma membrane. In Arabidopsis thaliana (Mouse-ear cress), this protein is Vacuolar protein sorting-associated protein 35A (VPS35A).